A 462-amino-acid chain; its full sequence is Elongation factor 1-alpha 1 (462 aa).

Residue Gly2 is modified to N,N,N-trimethylglycine. Positions Lys5–Thr242 constitute a tr-type G domain. The tract at residues Gly14 to Ser21 is G1. Gly14 to Ser21 contacts GTP. Lys36 carries the post-translational modification N6,N6,N6-trimethyllysine; alternate. N6,N6-dimethyllysine; alternate is present on Lys36. At Lys36 the chain carries N6-methyllysine; alternate. An N6,N6-dimethyllysine modification is found at Lys55. Residues Gly70–Asp74 form a G2 region. An N6,N6,N6-trimethyllysine; by EEF1AKMT1 modification is found at Lys79. Residues Asp91–Gly94 are G3. Asn153–Asp156 is a binding site for GTP. The tract at residues Asn153 to Asp156 is G4. Residue Lys165 is modified to N6,N6,N6-trimethyllysine; alternate; by EEF1AKMT3. Lys165 bears the N6,N6-dimethyllysine; alternate; by EEF1AKMT3 mark. N6-acetyllysine; alternate is present on Lys165. At Lys165 the chain carries N6-methyllysine; alternate; by EEF1AKMT3. Lys172 carries the post-translational modification N6-acetyllysine. Ser194–Trp196 serves as a coordination point for GTP. The tract at residues Ser194–Trp196 is G5. N6-acetyllysine is present on Lys273. Residue Ser300 is modified to Phosphoserine; by TGFBR1. Position 301 is a 5-glutamyl glycerylphosphorylethanolamine (Glu301). Lys318 is modified (N6,N6,N6-trimethyllysine; by EEF1AKMT2). 5-glutamyl glycerylphosphorylethanolamine is present on Glu374. Residue Lys385 forms a Glycyl lysine isopeptide (Lys-Gly) (interchain with G-Cter in ubiquitin) linkage. Lys392 is subject to N6-acetyllysine; alternate. An N6-succinyllysine; alternate modification is found at Lys392. Thr432 bears the Phosphothreonine; by PASK mark. An N6-acetyllysine modification is found at Lys439.

The protein belongs to the TRAFAC class translation factor GTPase superfamily. Classic translation factor GTPase family. EF-Tu/EF-1A subfamily. Found in a nuclear export complex with XPO5, EEF1A1, Ran and aminoacylated tRNA. Interacts with PARP1 and TXK. Interacts with KARS1. May interact with ERGIC2. Interacts with IFIT1 (via TPR repeats 4-7). Interacts with DLC1, facilitating distribution to the membrane periphery and ruffles upon growth factor stimulation. Interacts with ZPR1; the interaction occurs in a epidermal growth factor (EGF)-dependent manner. Interacts with PPP1R16B. Interacts with SPHK1 and SPHK2; both interactions increase SPHK1 and SPHK2 kinase activity. Interacts with guanyl-nucleotide exchange factor EEF1B2. Interacts (via middle-region) with HTATIP2 (via N-terminus); the interaction is direct and competes with EEF1A1 binding to guanyl-nucleotide exchange factor EEF1B2, thereby inhibiting GDP for GTP exchange and reactivation of EEF1A1. Interacts with tRNA. ISGylated. Post-translationally, phosphorylated by TXK. Phosphorylation by PASK increases translation efficiency. Phosphorylated by ROCK2. Phosphorylation by TGFBR1 inhibits translation elongation. In terms of processing, trimethylated at Lys-79 by EEF1AKMT1. Methylated at Lys-165 by EEF1AKMT3, methylation by EEF1AKMT3 is dynamic as well as inducible by stress conditions, such as ER-stress, and plays a regulatory role on mRNA translation. Trimethylated at Lys-318 by EEF1AKMT2. Mono-, di-, and trimethylated at Lys-36 by EEF1AKMT4; trimethylated form is predominant. Methylation by EEF1AKMT4 contributes to the fine-tuning of translation rates for a subset of tRNAs. Trimethylated at Gly-2 by METTL13. Mono- and dimethylated at Lys-55 by METTL13; dimethylated form is predominant. Ubiquitinated at Lys-385 by RNF14 in response to ribosome collisions (ribosome stalling), leading to its degradation by the proteasome and rescue of stalled ribosomes.

The protein localises to the cytoplasm. It is found in the nucleus. Its subcellular location is the nucleolus. It localises to the cell membrane. The catalysed reaction is GTP + H2O = GDP + phosphate + H(+). Functionally, translation elongation factor that catalyzes the GTP-dependent binding of aminoacyl-tRNA (aa-tRNA) to the A-site of ribosomes during the elongation phase of protein synthesis. Base pairing between the mRNA codon and the aa-tRNA anticodon promotes GTP hydrolysis, releasing the aa-tRNA from EEF1A1 and allowing its accommodation into the ribosome. The growing protein chain is subsequently transferred from the P-site peptidyl tRNA to the A-site aa-tRNA, extending it by one amino acid through ribosome-catalyzed peptide bond formation. Also plays a role in the positive regulation of IFNG transcription in T-helper 1 cells as part of an IFNG promoter-binding complex with TXK and PARP1. Also plays a role in cytoskeleton organization by promoting actin bundling. This is Elongation factor 1-alpha 1 (EEF1A1) from Equus caballus (Horse).